A 343-amino-acid chain; its full sequence is Anthranilate phosphoribosyltransferase (343 aa).

5-phospho-alpha-D-ribose 1-diphosphate-binding positions include Gly-84, 87-88 (GD), Thr-92, 94-97 (NIST), 112-120 (KHGNRGVSS), and Ser-124. Anthranilate is bound at residue Gly-84. Ser-96 lines the Mg(2+) pocket. Asn-115 lines the anthranilate pocket. An anthranilate-binding site is contributed by Arg-170. Residues Asp-229 and Glu-230 each contribute to the Mg(2+) site.

This sequence belongs to the anthranilate phosphoribosyltransferase family. Homodimer. The cofactor is Mg(2+).

It carries out the reaction N-(5-phospho-beta-D-ribosyl)anthranilate + diphosphate = 5-phospho-alpha-D-ribose 1-diphosphate + anthranilate. It participates in amino-acid biosynthesis; L-tryptophan biosynthesis; L-tryptophan from chorismate: step 2/5. Functionally, catalyzes the transfer of the phosphoribosyl group of 5-phosphorylribose-1-pyrophosphate (PRPP) to anthranilate to yield N-(5'-phosphoribosyl)-anthranilate (PRA). This is Anthranilate phosphoribosyltransferase from Burkholderia thailandensis (strain ATCC 700388 / DSM 13276 / CCUG 48851 / CIP 106301 / E264).